A 455-amino-acid polypeptide reads, in one-letter code: UDP-N-acetylmuramoyl-tripeptide--D-alanyl-D-alanine ligase (455 aa).

An ATP-binding site is contributed by 107 to 113; that stretch reads GSCGKTS.

Belongs to the MurCDEF family. MurF subfamily.

It localises to the cytoplasm. The enzyme catalyses D-alanyl-D-alanine + UDP-N-acetyl-alpha-D-muramoyl-L-alanyl-gamma-D-glutamyl-meso-2,6-diaminopimelate + ATP = UDP-N-acetyl-alpha-D-muramoyl-L-alanyl-gamma-D-glutamyl-meso-2,6-diaminopimeloyl-D-alanyl-D-alanine + ADP + phosphate + H(+). It participates in cell wall biogenesis; peptidoglycan biosynthesis. Involved in cell wall formation. Catalyzes the final step in the synthesis of UDP-N-acetylmuramoyl-pentapeptide, the precursor of murein. In Buchnera aphidicola subsp. Acyrthosiphon pisum (strain APS) (Acyrthosiphon pisum symbiotic bacterium), this protein is UDP-N-acetylmuramoyl-tripeptide--D-alanyl-D-alanine ligase.